Consider the following 3498-residue polypeptide: Mediator of RNA polymerase II transcription subunit 12 (3498 aa).

Disordered stretches follow at residues 365–456 (IKQH…HTDI), 497–764 (GGVG…EPEK), 2209–2576 (AKKR…AYMK), 2589–2620 (ENNR…EAYA), 2637–2889 (LRKE…KEKQ), and 2917–3498 (NVAG…PNQY). Positions 368–394 (HEKRKAGSLKKSERRRRRGLSKNRPKK) are enriched in basic residues. Basic and acidic residues predominate over residues 404 to 416 (SLDHDKVQIKQEP). Polar residues-rich tracts occupy residues 424 to 440 (GQQS…SHQY) and 512 to 536 (SNPT…SASP). Residues 539 to 570 (SVDKENECEKKEDESKTKEKNKDKEKDKEKEK) are a coiled coil. Basic and acidic residues-rich tracts occupy residues 540-578 (VDKE…HTND) and 593-614 (ANDK…TGKE). Over residues 621 to 630 (SKTAKTSTSA) the composition is skewed to low complexity. Basic and acidic residues-rich tracts occupy residues 691-719 (EVDK…KKAD), 738-764 (ESEK…EPEK), and 2209-2285 (AKKR…KRAS). The required for nuclear localization stretch occupies residues 2142–3498 (QTTRLDKVAK…YPNQQPPNQY (1357 aa)). Residues 2203 to 2290 (VIDEEEAKKR…EKRASDAAAA (88 aa)) adopt a coiled-coil conformation. 2 stretches are compositionally biased toward low complexity: residues 2342–2360 (RADT…APIA) and 2409–2431 (LADA…SSMP). Positions 2395-2420 (RNLLNRKKEEKRNSLADASAAAAAAN) form a coiled coil. The span at 2444–2456 (QSAGATQQLQGMQ) shows a compositional bias: polar residues. The segment covering 2459–2479 (QMGGSMSGMNQNMGGMNQSMS) has biased composition (low complexity). Residues 2514-2530 (NRSSGPVSSETRQQIME) are compositionally biased toward polar residues. Composition is skewed to basic and acidic residues over residues 2547 to 2576 (QKQR…AYMK), 2589 to 2616 (ENNR…RAAE), and 2637 to 2724 (LRKE…EQQR). Residues 2725 to 2770 (RSQQNPYMNQQGQYSQQPPPSYQQSSYPNNYQPGQQGNQPPNYQQP) show a composition bias toward low complexity. A compositionally biased stretch (polar residues) spans 2771–2783 (SHQSMQQGHQAGY). The segment covering 2784–2810 (QQTSNQMQMNMQQQQNRQQGGPQQSFS) has biased composition (low complexity). Composition is skewed to polar residues over residues 2816–2827 (NQPSQPGYSGYN), 2842–2852 (RNPFGNQQDMQ), 2868–2881 (HAQQ…QLSL), and 2926–2956 (GQQQ…SSNP). A compositionally biased stretch (low complexity) spans 2957-2993 (QGGMQSYQQQQPVLGQPGPIQTGQSTQQQIPAQSQQQ). A compositionally biased stretch (polar residues) spans 2994-3009 (YNSGRPQMHTTPTKND). Positions 3039–3100 (GQNVPGGYQQ…NVSQSQSAAQ (62 aa)) are enriched in low complexity. Positions 3103 to 3127 (RPSQDSAYQQSGYNQTGNQSYQRPD) are enriched in polar residues. 2 stretches are compositionally biased toward low complexity: residues 3128–3184 (QQQQ…SAQY) and 3192–3223 (QGYD…QTQQ). Residues 3231–3253 (SGYTANSGGSSNILNQSMEESGL) are compositionally biased toward polar residues. The span at 3254–3311 (NQGFSGASSNASSQQGGSSQMQQSGYGMPGNQMQMQQNQKQQVQRGMPTGMGQTNMGQ) shows a compositional bias: low complexity. The span at 3312 to 3321 (SGMGQSGMGQ) shows a compositional bias: gly residues. Low complexity-rich tracts occupy residues 3336-3356 (QGQQ…NQRG) and 3370-3408 (QQQH…QGQQ). Residues 3414 to 3425 (PSQQQSGAAYSN) are compositionally biased toward polar residues. Residues 3426-3436 (QMQFQGVRQGQ) are compositionally biased toward low complexity. A compositionally biased stretch (gly residues) spans 3437 to 3446 (QGMGGMGGSG). The span at 3447 to 3498 (QQQPQTQPHGSNQYYQQQQDQRMQQQPQQPGQQQQHGYGMGQYPNQQPPNQY) shows a compositional bias: low complexity.

This sequence belongs to the Mediator complex subunit 12 family. Component of the Mediator complex. As to expression, ubiquitously expressed.

It is found in the nucleus. Component of the Mediator complex, a coactivator involved in regulated gene transcription of nearly all RNA polymerase II-dependent genes. Mediator functions as a bridge to convey information from gene-specific regulatory proteins to the basal RNA polymerase II transcription machinery. Mediator is recruited to promoters by direct interactions with regulatory proteins and serves as a scaffold for the assembly of a functional preinitiation complex with RNA polymerase II and the general transcription factors. Functions downstream of let-60 during vulval induction. Required for asymmetric division of T-cells and for hypodermal development. This chain is Mediator of RNA polymerase II transcription subunit 12 (dpy-22), found in Caenorhabditis elegans.